A 251-amino-acid chain; its full sequence is Protection of telomeres homolog 2 (251 aa).

The disordered stretch occupies residues 221 to 251; the sequence is ELDNWPEGPPKTFAEAIARANNSRRPRDPPQ.

Belongs to the telombin family.

It is found in the nucleus. The protein resides in the chromosome. The protein localises to the telomere. Telomeric DNA-binding protein, which binds to two or more single-stranded G-rich repeat sequences (G-strand), with high specificity to the 5'-TTAGGC-3' sequence. In addition, repeat sequence binding requires a 3' single-stranded telomeric overhang. Acts redundantly with pot-1 to negatively regulate telomerase-mediated telomere extension. Also regulates telomere length by the telomerase-independent telomere maintenance pathway called ALT (alternative lengthening of telomeres). Does not appear to have a role in anchoring telomeres to the nuclear envelope. This chain is Protection of telomeres homolog 2, found in Caenorhabditis elegans.